A 215-amino-acid chain; its full sequence is Cytochrome b6 (215 aa).

Residues 32-52 traverse the membrane as a helical segment; it reads IFYCLGGITLTCFLVQVATGF. Residue Cys35 coordinates heme c. Residues His86 and His100 each coordinate heme b. The next 3 membrane-spanning stretches (helical) occupy residues 90–110, 116–136, and 186–206; these read ASMMVLMMILHVFRVYLTGGF, LTWVTGVVLAVLTASFGVTGY, and LHTFVLPLLTAVFMLMHFLMI. The heme b site is built by His187 and His202.

The protein belongs to the cytochrome b family. PetB subfamily. The 4 large subunits of the cytochrome b6-f complex are cytochrome b6, subunit IV (17 kDa polypeptide, PetD), cytochrome f and the Rieske protein, while the 4 small subunits are PetG, PetL, PetM and PetN. The complex functions as a dimer. Heme b serves as cofactor. It depends on heme c as a cofactor.

It localises to the plastid. The protein localises to the chloroplast thylakoid membrane. Its function is as follows. Component of the cytochrome b6-f complex, which mediates electron transfer between photosystem II (PSII) and photosystem I (PSI), cyclic electron flow around PSI, and state transitions. This chain is Cytochrome b6, found in Nicotiana tabacum (Common tobacco).